An 85-amino-acid chain; its full sequence is Oxytocin-neurophysin 1 (85 aa).

Glycine 3 is modified (glycine amide). 6 cysteine pairs are disulfide-bonded: cysteine 16/cysteine 60, cysteine 19/cysteine 33, cysteine 27/cysteine 50, cysteine 34/cysteine 40, cysteine 67/cysteine 79, and cysteine 80/cysteine 85.

It belongs to the vasopressin/oxytocin family. As to quaternary structure, interacts with oxytocin receptor (Ki=1.5 nM). Interacts with vasopressin V1aR/AVPR1A (Ki=37 nM), V1bR/AVPR1B (Ki=222 nM), and V2R/AVPR2 receptors (Ki=823 nM).

Its function is as follows. Neurophysin 1 specifically binds oxytocin. Functionally, oxytocin causes contraction of the smooth muscle of the uterus and of the mammary gland. Acts by binding to oxytocin receptor (OXTR). The protein is Oxytocin-neurophysin 1 (OXT) of Papio hamadryas (Hamadryas baboon).